The following is a 223-amino-acid chain: Phosphoribosylformylglycinamidine synthase subunit PurQ (223 aa).

The region spanning 4-223 is the Glutamine amidotransferase type-1 domain; the sequence is RIGVITFPGT…FQSVLSTLVS (220 aa). The active-site Nucleophile is the C87. Active-site residues include H195 and E197.

In terms of assembly, part of the FGAM synthase complex composed of 1 PurL, 1 PurQ and 2 PurS subunits.

Its subcellular location is the cytoplasm. The enzyme catalyses N(2)-formyl-N(1)-(5-phospho-beta-D-ribosyl)glycinamide + L-glutamine + ATP + H2O = 2-formamido-N(1)-(5-O-phospho-beta-D-ribosyl)acetamidine + L-glutamate + ADP + phosphate + H(+). The catalysed reaction is L-glutamine + H2O = L-glutamate + NH4(+). It functions in the pathway purine metabolism; IMP biosynthesis via de novo pathway; 5-amino-1-(5-phospho-D-ribosyl)imidazole from N(2)-formyl-N(1)-(5-phospho-D-ribosyl)glycinamide: step 1/2. In terms of biological role, part of the phosphoribosylformylglycinamidine synthase complex involved in the purines biosynthetic pathway. Catalyzes the ATP-dependent conversion of formylglycinamide ribonucleotide (FGAR) and glutamine to yield formylglycinamidine ribonucleotide (FGAM) and glutamate. The FGAM synthase complex is composed of three subunits. PurQ produces an ammonia molecule by converting glutamine to glutamate. PurL transfers the ammonia molecule to FGAR to form FGAM in an ATP-dependent manner. PurS interacts with PurQ and PurL and is thought to assist in the transfer of the ammonia molecule from PurQ to PurL. This Corynebacterium jeikeium (strain K411) protein is Phosphoribosylformylglycinamidine synthase subunit PurQ.